Here is a 558-residue protein sequence, read N- to C-terminus: Potassium-transporting ATPase potassium-binding subunit (558 aa).

The next 12 helical transmembrane spans lie at 1–21 (MEIILFLTMMVMITYVFSGYL), 66–86 (FNGFMGFITFVLLIVQQWLFL), 127–147 (MIVMTYLMFTSSASGYAVCIA), 166–186 (IVRFIVRVLLPLSCLISILLM), 245–265 (IWSNFIEMGSMMLLPMSMLFL), 281–301 (ALILFVAMFFIFIAILTLTMW), 327–347 (FGAGLSALFTVITTAFTTGSV), 354–374 (LTPIGGLGPMVLMMLNVVFGG), 377–397 (VGLMNLLIFVLLTVFICSLMV), 416–436 (IVLVFLIHPILILVFSALAFM), 482–502 (ISTGIIMLLSRYIPIILQLMI), and 531–551 (IVFIVLLSGLTFIPVLLLGPI).

Belongs to the KdpA family. As to quaternary structure, the system is composed of three essential subunits: KdpA, KdpB and KdpC.

The protein localises to the cell membrane. Its function is as follows. Part of the high-affinity ATP-driven potassium transport (or Kdp) system, which catalyzes the hydrolysis of ATP coupled with the electrogenic transport of potassium into the cytoplasm. This subunit binds the extracellular potassium ions and delivers the ions to the membrane domain of KdpB through an intramembrane tunnel. The sequence is that of Potassium-transporting ATPase potassium-binding subunit from Staphylococcus aureus (strain USA300).